Consider the following 642-residue polypeptide: Tigger transposable element derived 5 (642 aa).

The tract at residues 1 to 54 is disordered; it reads MYPASPSAGPALHPVPHRARLPRPRCLAEPPRSPAPGPGSTARPPPPAPGPRPR. A compositionally biased stretch (pro residues) spans 31–52; that stretch reads PRSPAPGPGSTARPPPPAPGPR. An HTH psq-type domain is found at 56–107; that stretch reads AVKMTFRKAYSIKDKLQAIERVKGGERQASVCRDFGVPGGTLRGWLKDEPKL. DNA-binding regions (H-T-H motif) lie at residues 83–103 and 154–187; these read QASV…WLKD and PVIQ…WQKR. The HTH CENPB-type domain occupies 121-194; it reads QRKKMRLANE…QKRHGISSQR (74 aa). Over residues 198 to 208 the composition is skewed to low complexity; sequence EAEPPVAGPAP. Residues 198–230 are disordered; sequence EAEPPVAGPAPVKEEPAQPSSAGLLLDGTPATL. The DDE-1 domain occupies 239–364; sequence DEQIYNANVT…CLQQKAVLLV (126 aa). Residues 543–583 form a disordered region; sequence GLPEGCGEEVAPAAPPSPASLPSSIGAGEEEEEEATEQGGV.

This sequence belongs to the tigger transposable element derived protein family.

Its subcellular location is the nucleus. The sequence is that of Tigger transposable element derived 5 (Tigd5) from Rattus norvegicus (Rat).